A 237-amino-acid polypeptide reads, in one-letter code: Putative ATP-binding protein BMEII0108 (237 aa).

An ABC transporter domain is found at 5-205; it reads ISFNNVVMRY…DLPYPRTEAI (201 aa). ATP is bound at residue 37–44; the sequence is GPSGCGKS.

This sequence belongs to the ABC transporter superfamily. The complex is composed of two ATP-binding proteins (BMEII0108), two transmembrane proteins (BMEII0107) and a solute-binding protein (BMEII0109).

It is found in the cell inner membrane. In terms of biological role, probably part of an ABC transporter complex. Probably Responsible for energy coupling to the transport system. In Brucella melitensis biotype 1 (strain ATCC 23456 / CCUG 17765 / NCTC 10094 / 16M), this protein is Putative ATP-binding protein BMEII0108.